Here is a 490-residue protein sequence, read N- to C-terminus: MVPVIALVGRPNVGKSTMFNRLTRTRDAIVGDLSGLTRDRQYGEAKWQGRSYILIDTGGISGDEHGMDEKMAEQSLLAIEEADVVLFLVDARAGYTAADQMIGEHLRKRNKRSYVVANKIDNIDENLARAEFSPMGLGDAIPVAGAHGRGISQMLEIALREFPKDEDELEEGEEVEEVAEGQEAKRIPGPSEKDGIKIAIIGRPNVGKSTLVNRMLGEDRVIVYDEPGTTRDSIYIPFERNEEKYTLIDTAGVRKRGKIHEEVEKFSVVKTLQAIKDANVVIFVMDAREGVVDHDLNLLGFALEAGRALVIALNKWDGMTPGERDFVKIELERRLFFVDFADIHFISAMHGTGVGNLYQSVQNSFKSAVTRWPTSRLTQILEDAVSEHAPPMVGSRRIKLRYAHLGGANPPLIVIHGNQVEKVPKSYVRYLENTYRRVLKLVGTPIRIEFKGGENPYEGNKNTLTDRQVNKKRRMMSHHKKADKKRRDKR.

EngA-type G domains lie at Pro-3–Glu-166 and Ile-196–Val-369. GTP is bound by residues Gly-9 to Ser-16, Asp-56 to Ile-60, Asn-118 to Asp-121, Gly-202 to Ser-209, Asp-249 to Val-253, and Asn-314 to Asp-317. Positions Thr-370–Glu-454 constitute a KH-like domain. Residues Gly-452–Arg-490 are disordered. The span at Asn-470–Arg-490 shows a compositional bias: basic residues.

It belongs to the TRAFAC class TrmE-Era-EngA-EngB-Septin-like GTPase superfamily. EngA (Der) GTPase family. As to quaternary structure, associates with the 50S ribosomal subunit.

Its function is as follows. GTPase that plays an essential role in the late steps of ribosome biogenesis. The polypeptide is GTPase Der (Pseudomonas savastanoi pv. phaseolicola (strain 1448A / Race 6) (Pseudomonas syringae pv. phaseolicola (strain 1448A / Race 6))).